Consider the following 182-residue polypeptide: tRNA-splicing endonuclease (182 aa).

Catalysis depends on residues tyrosine 119, histidine 127, and lysine 158.

Belongs to the tRNA-intron endonuclease family. Archaeal short subfamily. Homotetramer; although the tetramer contains four active sites, only two participate in the cleavage. Therefore, it should be considered as a dimer of dimers.

The enzyme catalyses pretRNA = a 3'-half-tRNA molecule with a 5'-OH end + a 5'-half-tRNA molecule with a 2',3'-cyclic phosphate end + an intron with a 2',3'-cyclic phosphate and a 5'-hydroxyl terminus.. Endonuclease that removes tRNA introns. Cleaves pre-tRNA at the 5'- and 3'-splice sites to release the intron. The products are an intron and two tRNA half-molecules bearing 2',3' cyclic phosphate and 5'-OH termini. Recognizes a pseudosymmetric substrate in which 2 bulged loops of 3 bases are separated by a stem of 4 bp. This is tRNA-splicing endonuclease from Saccharolobus islandicus (strain M.16.27) (Sulfolobus islandicus).